The primary structure comprises 263 residues: Glucosamine-6-phosphate deaminase (263 aa).

Residue D67 is the Proton acceptor; for enolization step of the active site. The active-site For ring-opening step is N136. The Proton acceptor; for ring-opening step role is filled by H138. The active-site For ring-opening step is the E143.

It belongs to the glucosamine/galactosamine-6-phosphate isomerase family. NagB subfamily. In terms of assembly, homohexamer.

The catalysed reaction is alpha-D-glucosamine 6-phosphate + H2O = beta-D-fructose 6-phosphate + NH4(+). The protein operates within amino-sugar metabolism; N-acetylneuraminate degradation; D-fructose 6-phosphate from N-acetylneuraminate: step 5/5. Functionally, catalyzes the reversible isomerization-deamination of glucosamine 6-phosphate (GlcN6P) to form fructose 6-phosphate (Fru6P) and ammonium ion. The polypeptide is Glucosamine-6-phosphate deaminase (Cellvibrio japonicus (strain Ueda107) (Pseudomonas fluorescens subsp. cellulosa)).